The primary structure comprises 256 residues: Ethylene-responsive transcription factor ERF084 (256 aa).

The segment at residues 115–172 (GFMGVRKRPWGRWSAEIRDRIGRCRHWLGTFDTAEEAARAYDAAARRLRGTKAKTNFV) is a DNA-binding region (AP2/ERF).

This sequence belongs to the AP2/ERF transcription factor family. ERF subfamily.

Its subcellular location is the nucleus. Functionally, probably acts as a transcriptional activator. Binds to the GCC-box pathogenesis-related promoter element. May be involved in the regulation of gene expression by stress factors and by components of stress signal transduction pathways. The chain is Ethylene-responsive transcription factor ERF084 (ERF084) from Arabidopsis thaliana (Mouse-ear cress).